Consider the following 376-residue polypeptide: Protein FAM199X (376 aa).

A compositionally biased stretch (basic and acidic residues) spans Y237–K253. A disordered region spans residues Y237–S350. Positions T255 to S300 are enriched in low complexity. Basic residues predominate over residues D318 to Q337. Residues K320–L349 are a coiled coil. Over residues L338–L349 the composition is skewed to basic and acidic residues.

The protein belongs to the FAM199 family.

The chain is Protein FAM199X (fam199x) from Xenopus tropicalis (Western clawed frog).